The primary structure comprises 239 residues: Ribosomal RNA small subunit methyltransferase G (239 aa).

S-adenosyl-L-methionine is bound by residues G78, F83, 129 to 130 (AE), and R148.

Belongs to the methyltransferase superfamily. RNA methyltransferase RsmG family.

Its subcellular location is the cytoplasm. Functionally, specifically methylates the N7 position of a guanine in 16S rRNA. The protein is Ribosomal RNA small subunit methyltransferase G of Clostridium perfringens (strain 13 / Type A).